An 85-amino-acid chain; its full sequence is Hepcidin (85 aa).

The signal sequence occupies residues 1 to 22 (MALSTRIQAACLLLLLLASVAS). Residues 23–54 (VSVLPHQTGQLTDLRAQDTAGAEAGLQPTLQL) constitute a propeptide that is removed on maturation. 4 disulfide bridges follow: Cys-67-Cys-83, Cys-70-Cys-73, Cys-71-Cys-79, and Cys-74-Cys-82.

The protein belongs to the hepcidin family. As to quaternary structure, interacts with SLC40A1; this interaction promotes SLC40A1 rapid ubiquitination.

It localises to the secreted. In terms of biological role, liver-produced hormone that constitutes the main circulating regulator of iron absorption and distribution across tissues. Acts by promoting endocytosis and degradation of ferroportin/SLC40A1, leading to the retention of iron in iron-exporting cells and decreased flow of iron into plasma. Controls the major flows of iron into plasma: absorption of dietary iron in the intestine, recycling of iron by macrophages, which phagocytose old erythrocytes and other cells, and mobilization of stored iron from hepatocytes. Has strong antimicrobial activity against E.coli ML35P N.cinerea and weaker against S.epidermidis, S.aureus and group b streptococcus bacteria. Active against the fungus C.albicans. No activity against P.aeruginosa. In Canis lupus familiaris (Dog), this protein is Hepcidin (HAMP).